A 383-amino-acid chain; its full sequence is 8-amino-7-oxononanoate synthase (383 aa).

2 residues coordinate substrate: R27 and R34. Residue 114-115 participates in pyridoxal 5'-phosphate binding; the sequence is GY. A substrate-binding site is contributed by H139. Pyridoxal 5'-phosphate-binding positions include S187, 212 to 215, and 232 to 235; these read DDAH and TLSK. K235 carries the N6-(pyridoxal phosphate)lysine modification. T344 serves as a coordination point for substrate.

This sequence belongs to the class-II pyridoxal-phosphate-dependent aminotransferase family. BioF subfamily. Homodimer. Pyridoxal 5'-phosphate serves as cofactor.

The catalysed reaction is 6-carboxyhexanoyl-[ACP] + L-alanine + H(+) = (8S)-8-amino-7-oxononanoate + holo-[ACP] + CO2. The protein operates within cofactor biosynthesis; biotin biosynthesis. Catalyzes the decarboxylative condensation of pimeloyl-[acyl-carrier protein] and L-alanine to produce 8-amino-7-oxononanoate (AON), [acyl-carrier protein], and carbon dioxide. The polypeptide is 8-amino-7-oxononanoate synthase (Methylorubrum extorquens (strain PA1) (Methylobacterium extorquens)).